A 401-amino-acid polypeptide reads, in one-letter code: Acetate kinase (401 aa).

A Mg(2+)-binding site is contributed by Asn-7. Lys-14 lines the ATP pocket. Arg-91 contacts substrate. Residue Asp-148 is the Proton donor/acceptor of the active site. ATP is bound by residues 208-212 (HLGNG), 283-285 (DFR), and 332-336 (GVGEN). Residue Glu-385 coordinates Mg(2+).

It belongs to the acetokinase family. Homodimer. It depends on Mg(2+) as a cofactor. Mn(2+) serves as cofactor.

It localises to the cytoplasm. It catalyses the reaction acetate + ATP = acetyl phosphate + ADP. It functions in the pathway metabolic intermediate biosynthesis; acetyl-CoA biosynthesis; acetyl-CoA from acetate: step 1/2. Its function is as follows. Catalyzes the formation of acetyl phosphate from acetate and ATP. Can also catalyze the reverse reaction. The protein is Acetate kinase of Thermoanaerobacter pseudethanolicus (strain ATCC 33223 / 39E) (Clostridium thermohydrosulfuricum).